Consider the following 277-residue polypeptide: MAVKKYRPYTPSRRQMTTADFSGLTKKRPEKALTEALPKTGGRNNRGRITSRFIGGGHKRLYRIIDFKRRDKSGVSARVAAIEYDPNRSARIALLHFADGEKRYILAPEGLQVGATINTGPEAEPKLGNALPLRFIPVGAVVHALELVPGKGAQLARSAGTSVQVQGKESEYVIVRLPSGELRRIHTECYATIGAVGNAEHKNINLGKAGRSRWLGRKPHQRGSAMNPVDHPHGGGEGRTGAGRQPVSPWGQLAKGLKTRRKRKNSDRFIVTRRGGK.

2 disordered regions span residues 1 to 20 (MAVKKYRPYTPSRRQMTTAD) and 210 to 277 (GRSR…RGGK). The segment covering 210-221 (GRSRWLGRKPHQ) has biased composition (basic residues).

It belongs to the universal ribosomal protein uL2 family. Part of the 50S ribosomal subunit. Forms a bridge to the 30S subunit in the 70S ribosome.

In terms of biological role, one of the primary rRNA binding proteins. Required for association of the 30S and 50S subunits to form the 70S ribosome, for tRNA binding and peptide bond formation. It has been suggested to have peptidyltransferase activity; this is somewhat controversial. Makes several contacts with the 16S rRNA in the 70S ribosome. This is Large ribosomal subunit protein uL2 from Deinococcus deserti (strain DSM 17065 / CIP 109153 / LMG 22923 / VCD115).